Consider the following 427-residue polypeptide: UPF0229 protein YeaH (427 aa).

Positions 79–90 (NDHFVQNDRIER) are enriched in basic and acidic residues. A disordered region spans residues 79-110 (NDHFVQNDRIERPQGGGGGSGSGQGQASQDGE). Residues 92-102 (QGGGGGSGSGQ) show a composition bias toward gly residues.

Belongs to the UPF0229 family.

The chain is UPF0229 protein YeaH from Escherichia coli (strain K12 / MC4100 / BW2952).